The following is a 466-amino-acid chain: UDP-N-acetylmuramoylalanine--D-glutamate ligase (466 aa).

121–127 (GTNGKST) contributes to the ATP binding site.

Belongs to the MurCDEF family.

It is found in the cytoplasm. The enzyme catalyses UDP-N-acetyl-alpha-D-muramoyl-L-alanine + D-glutamate + ATP = UDP-N-acetyl-alpha-D-muramoyl-L-alanyl-D-glutamate + ADP + phosphate + H(+). It functions in the pathway cell wall biogenesis; peptidoglycan biosynthesis. Functionally, cell wall formation. Catalyzes the addition of glutamate to the nucleotide precursor UDP-N-acetylmuramoyl-L-alanine (UMA). This chain is UDP-N-acetylmuramoylalanine--D-glutamate ligase, found in Nitrobacter hamburgensis (strain DSM 10229 / NCIMB 13809 / X14).